The chain runs to 102 residues: Thioredoxin (102 aa).

The region spanning 1-102 (MVQIVSQDNF…SLVKLISKHQ (102 aa)) is the Thioredoxin domain. A disulfide bridge links C28 with C31.

Belongs to the thioredoxin family.

Its function is as follows. Participates in various redox reactions through the reversible oxidation of its active center dithiol to a disulfide and catalyzes dithiol-disulfide exchange reactions. The chain is Thioredoxin (trxA) from Chlamydia muridarum (strain MoPn / Nigg).